Here is a 1088-residue protein sequence, read N- to C-terminus: Exportin-T (1088 aa).

Residues 435-503 (KNNNNKNKNT…VKNANNIKNN (69 aa)) are compositionally biased toward low complexity. Disordered regions lie at residues 435 to 513 (KNNN…DDDD) and 1059 to 1088 (LNNN…KNGH).

Belongs to the exportin family.

It is found in the nucleus. The protein localises to the cytoplasm. Mediates the nuclear export of aminoacylated tRNAs. The chain is Exportin-T (xpot) from Dictyostelium discoideum (Social amoeba).